A 70-amino-acid chain; its full sequence is Large ribosomal subunit protein bL31 (70 aa).

4 residues coordinate Zn(2+): cysteine 16, cysteine 18, cysteine 37, and cysteine 40.

This sequence belongs to the bacterial ribosomal protein bL31 family. Type A subfamily. As to quaternary structure, part of the 50S ribosomal subunit. Requires Zn(2+) as cofactor.

Functionally, binds the 23S rRNA. The polypeptide is Large ribosomal subunit protein bL31 (Psychromonas ingrahamii (strain DSM 17664 / CCUG 51855 / 37)).